Here is a 214-residue protein sequence, read N- to C-terminus: Ribosomal RNA small subunit methyltransferase G (214 aa).

S-adenosyl-L-methionine-binding positions include Gly-56, Phe-61, 107-108 (IE), and Arg-125.

Belongs to the methyltransferase superfamily. RNA methyltransferase RsmG family.

Its subcellular location is the cytoplasm. Its function is as follows. Specifically methylates the N7 position of a guanine in 16S rRNA. This chain is Ribosomal RNA small subunit methyltransferase G, found in Syntrophomonas wolfei subsp. wolfei (strain DSM 2245B / Goettingen).